The primary structure comprises 503 residues: Glutamyl-tRNA(Gln) amidotransferase subunit A (503 aa).

Residues Lys-79 and Ser-154 each act as charge relay system in the active site. Ser-178 functions as the Acyl-ester intermediate in the catalytic mechanism.

The protein belongs to the amidase family. GatA subfamily. Heterotrimer of A, B and C subunits.

The enzyme catalyses L-glutamyl-tRNA(Gln) + L-glutamine + ATP + H2O = L-glutaminyl-tRNA(Gln) + L-glutamate + ADP + phosphate + H(+). Allows the formation of correctly charged Gln-tRNA(Gln) through the transamidation of misacylated Glu-tRNA(Gln) in organisms which lack glutaminyl-tRNA synthetase. The reaction takes place in the presence of glutamine and ATP through an activated gamma-phospho-Glu-tRNA(Gln). This is Glutamyl-tRNA(Gln) amidotransferase subunit A from Agathobacter rectalis (strain ATCC 33656 / DSM 3377 / JCM 17463 / KCTC 5835 / VPI 0990) (Eubacterium rectale).